The chain runs to 380 residues: Cytochrome b (380 aa).

Helical transmembrane passes span 33–53, 77–98, 113–133, and 178–198; these read FGSL…FLAM, WLIR…YMHI, WNIG…GYVL, and FFAF…LHLL. The heme b site is built by His83 and His97. Heme b-binding residues include His182 and His196. His201 serves as a coordination point for a ubiquinone. The next 4 helical transmembrane spans lie at 226-246, 288-308, 320-340, and 347-367; these read YKDL…ALFA, LGGV…PFLH, LTQM…WIGG, and FIII…VLFP.

Belongs to the cytochrome b family. In terms of assembly, the cytochrome bc1 complex contains 3 respiratory subunits (MT-CYB, CYC1 and UQCRFS1), 2 core proteins (UQCRC1 and UQCRC2) and probably 6 low-molecular weight proteins. Heme b serves as cofactor.

It is found in the mitochondrion inner membrane. Component of the ubiquinol-cytochrome c reductase complex (complex III or cytochrome b-c1 complex) that is part of the mitochondrial respiratory chain. The b-c1 complex mediates electron transfer from ubiquinol to cytochrome c. Contributes to the generation of a proton gradient across the mitochondrial membrane that is then used for ATP synthesis. The protein is Cytochrome b (mt-cyb) of Gadus morhua (Atlantic cod).